Here is a 179-residue protein sequence, read N- to C-terminus: Large ribosomal subunit protein uL5 (179 aa).

Belongs to the universal ribosomal protein uL5 family. As to quaternary structure, part of the 50S ribosomal subunit; part of the 5S rRNA/L5/L18/L25 subcomplex. Contacts the 5S rRNA and the P site tRNA. Forms a bridge to the 30S subunit in the 70S ribosome.

This is one of the proteins that bind and probably mediate the attachment of the 5S RNA into the large ribosomal subunit, where it forms part of the central protuberance. In the 70S ribosome it contacts protein S13 of the 30S subunit (bridge B1b), connecting the 2 subunits; this bridge is implicated in subunit movement. Contacts the P site tRNA; the 5S rRNA and some of its associated proteins might help stabilize positioning of ribosome-bound tRNAs. In Rickettsia rickettsii (strain Iowa), this protein is Large ribosomal subunit protein uL5.